The chain runs to 149 residues: Calmodulin (149 aa).

An N-acetylalanine modification is found at Ala2. 4 consecutive EF-hand domains span residues 8-43, 44-79, 81-116, and 117-149; these read EQIA…LGQN, PTEA…KMKD, DSEE…LGEK, and LTDE…MTSK. 14 residues coordinate Ca(2+): Asp21, Asp23, Asp25, Thr27, Glu32, Asp57, Asp59, Asp61, Thr63, Glu68, Asp94, Asp96, Asn98, and Glu105. The residue at position 116 (Lys116) is an N6,N6,N6-trimethyllysine. 5 residues coordinate Ca(2+): Asp130, Asp132, Asp134, Gln136, and Glu141.

The protein belongs to the calmodulin family.

Calmodulin mediates the control of a large number of enzymes, ion channels and other proteins by Ca(2+). Among the enzymes to be stimulated by the calmodulin-Ca(2+) complex are a number of protein kinases and phosphatases. In Pyuridae sp. (Sea squirt), this protein is Calmodulin.